Reading from the N-terminus, the 380-residue chain is Cytochrome b (380 aa).

Helical transmembrane passes span 33 to 53, 77 to 98, 113 to 133, and 178 to 198; these read FGSLLGACLILQITTGLFLAM, WTIRYLHANGASMFFICLFLHI, WNIGIILLLTTMAAAFMGYVL, and FFTFHFILPFIITALTTLHLL. Heme b contacts are provided by histidine 83 and histidine 97. Residues histidine 182 and histidine 196 each contribute to the heme b site. Position 201 (histidine 201) interacts with a ubiquinone. 4 helical membrane passes run 226 to 246, 288 to 308, 320 to 340, and 347 to 367; these read IKDILGLFLFLLTLMTLTLFS, LGGVLALLLSILILAMIPILH, LSQLLYWFLIADLFTLTWIGG, and FITIGQVASVLYFTTILFLMP.

It belongs to the cytochrome b family. The cytochrome bc1 complex contains 11 subunits: 3 respiratory subunits (MT-CYB, CYC1 and UQCRFS1), 2 core proteins (UQCRC1 and UQCRC2) and 6 low-molecular weight proteins (UQCRH/QCR6, UQCRB/QCR7, UQCRQ/QCR8, UQCR10/QCR9, UQCR11/QCR10 and a cleavage product of UQCRFS1). This cytochrome bc1 complex then forms a dimer. It depends on heme b as a cofactor.

It is found in the mitochondrion inner membrane. Component of the ubiquinol-cytochrome c reductase complex (complex III or cytochrome b-c1 complex) that is part of the mitochondrial respiratory chain. The b-c1 complex mediates electron transfer from ubiquinol to cytochrome c. Contributes to the generation of a proton gradient across the mitochondrial membrane that is then used for ATP synthesis. The protein is Cytochrome b (MT-CYB) of Gorilla gorilla gorilla (Western lowland gorilla).